The following is a 143-amino-acid chain: Alpha-amylase/trypsin inhibitor CM16 (143 aa).

Residues 1-24 (MASKSNCVLLLAAVLVSIFAAVAA) form the signal peptide.

It belongs to the protease inhibitor I6 (cereal trypsin/alpha-amylase inhibitor) family. As to quaternary structure, subunit of the tetrameric inhibitor. Post-translationally, five disulfide bonds, which are essential for the inhibitor activity, are probably present. Developing endosperm.

The protein resides in the secreted. Its function is as follows. Alpha-amylase/trypsin inhibitor. It could be involved in insect defense mechanisms. This is Alpha-amylase/trypsin inhibitor CM16 from Triticum aestivum (Wheat).